A 205-amino-acid chain; its full sequence is Putative 3-methyladenine DNA glycosylase (205 aa).

It belongs to the DNA glycosylase MPG family.

In Bacillus cereus (strain ATCC 10987 / NRS 248), this protein is Putative 3-methyladenine DNA glycosylase.